The following is a 161-amino-acid chain: Phenolic acid decarboxylase PadC (161 aa).

Positions 11 and 13 each coordinate substrate. The active-site Proton donor is Tyr19. Substrate is bound at residue Arg41. Residue Glu64 is the Proton acceptor of the active site.

This sequence belongs to the PadC family. In terms of assembly, homodimer.

It catalyses the reaction (E)-4-coumarate + H(+) = 4-vinylphenol + CO2. The enzyme catalyses (E)-cinnamate + H(+) = styrene + CO2. It carries out the reaction (E)-ferulate + H(+) = 2-methoxy-4-vinylphenol + CO2. Involved in the decarboxylation and detoxification of phenolic derivatives. It is able to catalyze the decarboxylation of ferulic, p-coumaric and caffeic acids. In Bacillus subtilis (strain 168), this protein is Phenolic acid decarboxylase PadC (padC).